Reading from the N-terminus, the 330-residue chain is Biotin synthase (330 aa).

Positions asparagine 53–serine 276 constitute a Radical SAM core domain. 3 residues coordinate [4Fe-4S] cluster: cysteine 68, cysteine 72, and cysteine 75. Residues cysteine 112, cysteine 144, cysteine 204, and arginine 274 each coordinate [2Fe-2S] cluster.

Belongs to the radical SAM superfamily. Biotin synthase family. As to quaternary structure, homodimer. [4Fe-4S] cluster serves as cofactor. It depends on [2Fe-2S] cluster as a cofactor.

It catalyses the reaction (4R,5S)-dethiobiotin + (sulfur carrier)-SH + 2 reduced [2Fe-2S]-[ferredoxin] + 2 S-adenosyl-L-methionine = (sulfur carrier)-H + biotin + 2 5'-deoxyadenosine + 2 L-methionine + 2 oxidized [2Fe-2S]-[ferredoxin]. Its pathway is cofactor biosynthesis; biotin biosynthesis; biotin from 7,8-diaminononanoate: step 2/2. Its function is as follows. Catalyzes the conversion of dethiobiotin (DTB) to biotin by the insertion of a sulfur atom into dethiobiotin via a radical-based mechanism. This is Biotin synthase from Streptococcus agalactiae serotype III (strain NEM316).